Reading from the N-terminus, the 506-residue chain is 2-isopropylmalate synthase (506 aa).

The Pyruvate carboxyltransferase domain maps to 4–266 (ILFMDTTLRD…EPSMTLKEIK (263 aa)). Mn(2+) contacts are provided by Asp-13, His-201, His-203, and Asn-237. Positions 390-506 (NITQLQVHFV…KLKSFIQLVK (117 aa)) are regulatory domain.

Belongs to the alpha-IPM synthase/homocitrate synthase family. LeuA type 1 subfamily. Homodimer. Mn(2+) serves as cofactor.

Its subcellular location is the cytoplasm. The catalysed reaction is 3-methyl-2-oxobutanoate + acetyl-CoA + H2O = (2S)-2-isopropylmalate + CoA + H(+). It functions in the pathway amino-acid biosynthesis; L-leucine biosynthesis; L-leucine from 3-methyl-2-oxobutanoate: step 1/4. Its function is as follows. Catalyzes the condensation of the acetyl group of acetyl-CoA with 3-methyl-2-oxobutanoate (2-ketoisovalerate) to form 3-carboxy-3-hydroxy-4-methylpentanoate (2-isopropylmalate). The polypeptide is 2-isopropylmalate synthase (Bacillus cereus (strain ATCC 10987 / NRS 248)).